A 335-amino-acid polypeptide reads, in one-letter code: Biotin synthase (335 aa).

The Radical SAM core domain maps to 46-274 (YDIQLASLFS…KSKIRLSAGR (229 aa)). [4Fe-4S] cluster-binding residues include cysteine 61, cysteine 65, and cysteine 68. [2Fe-2S] cluster contacts are provided by cysteine 105, cysteine 137, cysteine 197, and arginine 269.

It belongs to the radical SAM superfamily. Biotin synthase family. In terms of assembly, homodimer. It depends on [4Fe-4S] cluster as a cofactor. [2Fe-2S] cluster serves as cofactor.

It carries out the reaction (4R,5S)-dethiobiotin + (sulfur carrier)-SH + 2 reduced [2Fe-2S]-[ferredoxin] + 2 S-adenosyl-L-methionine = (sulfur carrier)-H + biotin + 2 5'-deoxyadenosine + 2 L-methionine + 2 oxidized [2Fe-2S]-[ferredoxin]. Its pathway is cofactor biosynthesis; biotin biosynthesis; biotin from 7,8-diaminononanoate: step 2/2. Its function is as follows. Catalyzes the conversion of dethiobiotin (DTB) to biotin by the insertion of a sulfur atom into dethiobiotin via a radical-based mechanism. This Prochlorococcus marinus (strain MIT 9215) protein is Biotin synthase.